A 404-amino-acid chain; its full sequence is NADH-quinone oxidoreductase subunit D 1 (404 aa).

It belongs to the complex I 49 kDa subunit family. In terms of assembly, NDH-1 is composed of 14 different subunits. Subunits NuoB, C, D, E, F, and G constitute the peripheral sector of the complex.

The protein resides in the cell membrane. It carries out the reaction a quinone + NADH + 5 H(+)(in) = a quinol + NAD(+) + 4 H(+)(out). Its function is as follows. NDH-1 shuttles electrons from NADH, via FMN and iron-sulfur (Fe-S) centers, to quinones in the respiratory chain. The immediate electron acceptor for the enzyme in this species is believed to be a menaquinone. Couples the redox reaction to proton translocation (for every two electrons transferred, four hydrogen ions are translocated across the cytoplasmic membrane), and thus conserves the redox energy in a proton gradient. This chain is NADH-quinone oxidoreductase subunit D 1, found in Symbiobacterium thermophilum (strain DSM 24528 / JCM 14929 / IAM 14863 / T).